The primary structure comprises 214 residues: Ras-related protein Rab-17 (214 aa).

Residue Ser29 is modified to Phosphoserine. Positions 31, 32, 33, and 50 each coordinate GTP. Thr33, Thr50, and Asp73 together coordinate Mg(2+). Positions 43–54 (DFSNVLPTVGCA) match the Switch 1 motif. Residues 75–91 (AGQEKYQSVCHLYFRGA) carry the Switch 2 motif. GTP is bound by residues Gly76, Asn132, Lys133, Asp135, and Ala163. The interval 183 to 204 (RAGDTGSSRPQEGEAVALNQEP) is disordered. S-geranylgeranyl cysteine attachment occurs at residues Cys211 and Cys212.

The protein belongs to the small GTPase superfamily. Rab family. It depends on Mg(2+) as a cofactor. In terms of tissue distribution, expressed in kidney, liver, and intestine mainly by epithelial cells. Expressed in hippocampus (at protein level).

Its subcellular location is the recycling endosome membrane. The protein resides in the melanosome. It localises to the cell projection. The protein localises to the dendrite. It carries out the reaction GTP + H2O = GDP + phosphate + H(+). Regulated by guanine nucleotide exchange factors (GEFs) which promote the exchange of bound GDP for free GTP. Regulated by GTPase activating proteins (GAPs) which increase the GTP hydrolysis activity. Inhibited by GDP dissociation inhibitors (GDIs). In terms of biological role, the small GTPases Rab are key regulators of intracellular membrane trafficking, from the formation of transport vesicles to their fusion with membranes. Rabs cycle between an inactive GDP-bound form and an active GTP-bound form that is able to recruit to membranes different set of downstream effectors directly responsible for vesicle formation, movement, tethering and fusion. RAB17 is involved in transcytosis, the directed movement of endocytosed material through the cell and its exocytosis from the plasma membrane at the opposite side. Mainly observed in epithelial cells, transcytosis mediates, for instance, the transcellular transport of immunoglobulins from the basolateral surface to the apical surface. Most probably controls membrane trafficking through apical recycling endosomes in a post-endocytic step of transcytosis. Required for melanosome transport and release from melanocytes, it also regulates dendrite and dendritic spine development. May also play a role in cell migration. In Mus musculus (Mouse), this protein is Ras-related protein Rab-17.